A 192-amino-acid polypeptide reads, in one-letter code: Elongation factor P (192 aa).

N6-(3,6-diaminohexanoyl)-5-hydroxylysine is present on Lys38.

The protein belongs to the elongation factor P family. May be beta-lysylated on the epsilon-amino group of Lys-38 by the combined action of EpmA and EpmB, and then hydroxylated on the C5 position of the same residue by EpmC (if this protein is present). Lysylation is critical for the stimulatory effect of EF-P on peptide-bond formation. The lysylation moiety may extend toward the peptidyltransferase center and stabilize the terminal 3-CCA end of the tRNA. Hydroxylation of the C5 position on Lys-38 may allow additional potential stabilizing hydrogen-bond interactions with the P-tRNA.

It is found in the cytoplasm. Its pathway is protein biosynthesis; polypeptide chain elongation. Involved in peptide bond synthesis. Alleviates ribosome stalling that occurs when 3 or more consecutive Pro residues or the sequence PPG is present in a protein, possibly by augmenting the peptidyl transferase activity of the ribosome. Modification of Lys-38 is required for alleviation. The sequence is that of Elongation factor P from Mannheimia succiniciproducens (strain KCTC 0769BP / MBEL55E).